Here is a 468-residue protein sequence, read N- to C-terminus: Keratin, type I cytoskeletal 26 (468 aa).

The segment at 1-82 (MSFRLSGGSR…GNEHSLLSGN (82 aa)) is head. Residues 83–118 (EKVTMQNLNDRLASYLDHVHALEEANADLEQKIKGW) form a coil 1A region. The 316-residue stretch at 83–398 (EKVTMQNLND…NLLDGEERKS (316 aa)) folds into the IF rod domain. Residues 119–140 (YEKCEPGSSREHDHDYSRYFSV) are linker 1. The segment at 141–232 (IEDLKRQIIS…KSHEEEMEVL (92 aa)) is coil 1B. A linker 12 region spans residues 233-255 (QYTAGGNVNVEMNATPGVDLTVL). The tract at residues 256–394 (LNNMRAEYED…DIYCNLLDGE (139 aa)) is coil 2. The tail stretch occupies residues 395–465 (ERKSKSTCYK…NITVEQRVPS (71 aa)).

The protein belongs to the intermediate filament family. In terms of assembly, heterotetramer of two type I and two type II keratins. As to expression, strongly expressed in skin and scalp, and weak expression observed in thymus and tongue. In the hair follicle, expression is restricted to the mid- to upper inner root sheath cuticle, being present slightly above the apex of the dermal papilla (at protein level).

The protein is Keratin, type I cytoskeletal 26 of Homo sapiens (Human).